A 243-amino-acid chain; its full sequence is HTH-type transcriptional regulator MlrA (243 aa).

The HTH merR-type domain maps to 3–72; that stretch reads LYTIGEVALL…VSKVKVLLSS (70 aa). The segment at residues 6–25 is a DNA-binding region (H-T-H motif); it reads IGEVALLCDINPVTLRAWQR.

Transcriptional activator of csgD, which is required for production of the curli (AgF). This is HTH-type transcriptional regulator MlrA from Salmonella typhimurium (strain SL1344).